Reading from the N-terminus, the 151-residue chain is uncharacterized protein (151 aa).

The tract at residues Met-1 to Ala-48 is disordered.

This is an uncharacterized protein from Homo sapiens (Human).